The chain runs to 63 residues: Large ribosomal subunit protein uL29 (63 aa).

It belongs to the universal ribosomal protein uL29 family.

This Bacillus cereus (strain ATCC 14579 / DSM 31 / CCUG 7414 / JCM 2152 / NBRC 15305 / NCIMB 9373 / NCTC 2599 / NRRL B-3711) protein is Large ribosomal subunit protein uL29.